Reading from the N-terminus, the 444-residue chain is Platelet-activating factor acetylhydrolase (444 aa).

An N-terminal signal peptide occupies residues 1 to 21; it reads MLPSKLHALFCLCTCLALVYP. N-linked (GlcNAc...) asparagine glycosylation is found at asparagine 60 and asparagine 200. The active-site Nucleophile is serine 274. Residues aspartate 297 and histidine 352 each act as charge relay system in the active site. N-linked (GlcNAc...) asparagine glycosylation is found at asparagine 424 and asparagine 434.

Belongs to the AB hydrolase superfamily. Lipase family. Post-translationally, N-glycosylated. As to expression, plasma.

The protein localises to the secreted. The protein resides in the extracellular space. The catalysed reaction is a 1-O-alkyl-2-acetyl-sn-glycero-3-phosphocholine + H2O = a 1-O-alkyl-sn-glycero-3-phosphocholine + acetate + H(+). It catalyses the reaction 1-O-decyl-2-acetyl-sn-glycero-3-phosphocholine + H2O = 1-O-decyl-sn-glycero-3-phosphocholine + acetate + H(+). The enzyme catalyses 1-O-dodecyl-2-acetyl-sn-glycero-3-phosphocholine + H2O = 1-O-dodecyl-sn-glycero-3-phosphocholine + acetate + H(+). It carries out the reaction 1-O-tetradecyl-2-acetyl-sn-glycero-3-phosphocholine + H2O = 1-O-tetradecyl-sn-glycero-3-phosphocholine + acetate + H(+). The catalysed reaction is 1-O-hexadecyl-2-acetyl-sn-glycero-3-phosphocholine + H2O = 1-O-hexadecyl-sn-glycero-3-phosphocholine + acetate + H(+). It catalyses the reaction 1-O-octadecyl-2-acetyl-sn-glycero-3-phosphocholine + H2O = 1-O-octadecyl-sn-glycero-3-phosphocholine + acetate + H(+). The enzyme catalyses 1-hexadecanoyl-2-acetyl-sn-glycero-3-phosphocholine + H2O = 1-hexadecanoyl-sn-glycero-3-phosphocholine + acetate + H(+). It carries out the reaction 1-hexadecanoyl-2-propionyl-sn-glycero-3-phosphocholine + H2O = propanoate + 1-hexadecanoyl-sn-glycero-3-phosphocholine + H(+). The catalysed reaction is 1-hexadecanoyl-2-butanoyl-sn-glycero-3-phosphocholine + H2O = butanoate + 1-hexadecanoyl-sn-glycero-3-phosphocholine + H(+). It catalyses the reaction 1-hexadecanoyl-2-pentanoyl-sn-glycero-3-phosphocholine + H2O = pentanoate + 1-hexadecanoyl-sn-glycero-3-phosphocholine + H(+). The enzyme catalyses 1-hexadecanoyl-2-glutaroyl-sn-glycero-3-phosphocholine + H2O = glutarate + 1-hexadecanoyl-sn-glycero-3-phosphocholine + H(+). It carries out the reaction 1-hexadecanoyl-2-(5-oxopentanoyl)-sn-glycero-3-phosphocholine + H2O = 5-oxopentanoate + 1-hexadecanoyl-sn-glycero-3-phosphocholine + H(+). The catalysed reaction is 1-hexadecanoyl-2-(9-oxononanoyl)-sn-glycero-3-phosphocholine + H2O = 9-oxononanoate + 1-hexadecanoyl-sn-glycero-3-phosphocholine + H(+). It catalyses the reaction 1-hexadecanoyl-2-[9-hydroperoxy-(10E-octadecenoyl)]-sn-glycero-3-phosphocholine + H2O = 9-hydroperoxy-10E-octadecenoate + 1-hexadecanoyl-sn-glycero-3-phosphocholine + H(+). The enzyme catalyses 1-hexadecanoyl-2-(10-hydroperoxy-8E-octadecenoyl)-sn-glycero-3-phosphocholine + H2O = 10-hydroperoxy-(8E)-octadecenoate + 1-hexadecanoyl-sn-glycero-3-phosphocholine + H(+). In terms of biological role, lipoprotein-associated calcium-independent phospholipase A2 involved in phospholipid catabolism during inflammatory and oxidative stress response. At the lipid-aqueous interface, hydrolyzes the ester bond of fatty acyl group attached at sn-2 position of phospholipids (phospholipase A2 activity). Specifically targets phospholipids with a short-chain fatty acyl group at sn-2 position. Can hydrolyze phospholipids with long fatty acyl chains, only if they carry oxidized functional groups. Hydrolyzes and inactivates platelet-activating factor (PAF, 1-O-alkyl-2-acetyl-sn-glycero-3-phosphocholine), a potent pro-inflammatory signaling lipid that acts through PTAFR on various innate immune cells. Hydrolyzes oxidatively truncated phospholipids carrying an aldehyde group at omega position, preventing their accumulation in low-density lipoprotein (LDL) particles and uncontrolled pro-inflammatory effects. As part of high-density lipoprotein (HDL) particles, can hydrolyze phospholipids having long-chain fatty acyl hydroperoxides at sn-2 position and protect against potential accumulation of these oxylipins in the vascular wall. Catalyzes the release from membrane phospholipids of F2-isoprostanes, lipid biomarkers of cellular oxidative damage. This Bos taurus (Bovine) protein is Platelet-activating factor acetylhydrolase (PLA2G7).